A 217-amino-acid polypeptide reads, in one-letter code: Pyridoxine/pyridoxamine 5'-phosphate oxidase (217 aa).

FMN is bound by residues 66-71 (RMVLLK), 81-82 (FT), R87, K88, and Q110. K71 contacts substrate. Residues Y128, R132, and S136 each coordinate substrate. FMN contacts are provided by residues 145–146 (QS) and W190. 196–198 (RLH) serves as a coordination point for substrate. R200 contacts FMN.

The protein belongs to the pyridoxamine 5'-phosphate oxidase family. Homodimer. The cofactor is FMN.

The catalysed reaction is pyridoxamine 5'-phosphate + O2 + H2O = pyridoxal 5'-phosphate + H2O2 + NH4(+). The enzyme catalyses pyridoxine 5'-phosphate + O2 = pyridoxal 5'-phosphate + H2O2. It participates in cofactor metabolism; pyridoxal 5'-phosphate salvage; pyridoxal 5'-phosphate from pyridoxamine 5'-phosphate: step 1/1. The protein operates within cofactor metabolism; pyridoxal 5'-phosphate salvage; pyridoxal 5'-phosphate from pyridoxine 5'-phosphate: step 1/1. Catalyzes the oxidation of either pyridoxine 5'-phosphate (PNP) or pyridoxamine 5'-phosphate (PMP) into pyridoxal 5'-phosphate (PLP). The polypeptide is Pyridoxine/pyridoxamine 5'-phosphate oxidase (Colwellia psychrerythraea (strain 34H / ATCC BAA-681) (Vibrio psychroerythus)).